The following is a 123-amino-acid chain: U11/U12 small nuclear ribonucleoprotein 25 kDa protein (123 aa).

One can recognise a Ubiquitin-like domain in the interval 32-123 (MTVRVCKMDG…VSFIKKLRQK (92 aa)).

In terms of assembly, component of the U11/U12 snRNPs that are part of the U12-type spliceosome.

It is found in the nucleus. The protein is U11/U12 small nuclear ribonucleoprotein 25 kDa protein (Snrnp25) of Mus musculus (Mouse).